The sequence spans 34 residues: Ornithine carbamoyltransferase, catabolic (34 aa).

The protein belongs to the aspartate/ornithine carbamoyltransferase superfamily. OTCase family. Probably nonameric or dodecameric.

The protein localises to the cytoplasm. The catalysed reaction is carbamoyl phosphate + L-ornithine = L-citrulline + phosphate + H(+). Its pathway is amino-acid degradation; L-arginine degradation via ADI pathway; carbamoyl phosphate from L-arginine: step 2/2. The protein is Ornithine carbamoyltransferase, catabolic (arcB) of Pseudomonas putida (Arthrobacter siderocapsulatus).